A 180-amino-acid polypeptide reads, in one-letter code: Large ribosomal subunit protein uL5 (180 aa).

Belongs to the universal ribosomal protein uL5 family. As to quaternary structure, part of the 50S ribosomal subunit; part of the 5S rRNA/L5/L18/L25 subcomplex. Contacts the 5S rRNA and the P site tRNA. Forms a bridge to the 30S subunit in the 70S ribosome.

In terms of biological role, this is one of the proteins that bind and probably mediate the attachment of the 5S RNA into the large ribosomal subunit, where it forms part of the central protuberance. In the 70S ribosome it contacts protein S13 of the 30S subunit (bridge B1b), connecting the 2 subunits; this bridge is implicated in subunit movement. Contacts the P site tRNA; the 5S rRNA and some of its associated proteins might help stabilize positioning of ribosome-bound tRNAs. This is Large ribosomal subunit protein uL5 from Roseiflexus sp. (strain RS-1).